A 434-amino-acid polypeptide reads, in one-letter code: Glutamyl-tRNA reductase (434 aa).

Residues Thr-49–Arg-52, Ser-109, Glu-114–Gln-116, and Gln-120 each bind substrate. Cys-50 acts as the Nucleophile in catalysis. Gly-189 to Cys-194 serves as a coordination point for NADP(+).

The protein belongs to the glutamyl-tRNA reductase family. In terms of assembly, homodimer.

The enzyme catalyses (S)-4-amino-5-oxopentanoate + tRNA(Glu) + NADP(+) = L-glutamyl-tRNA(Glu) + NADPH + H(+). It functions in the pathway porphyrin-containing compound metabolism; protoporphyrin-IX biosynthesis; 5-aminolevulinate from L-glutamyl-tRNA(Glu): step 1/2. Its function is as follows. Catalyzes the NADPH-dependent reduction of glutamyl-tRNA(Glu) to glutamate 1-semialdehyde (GSA). In Geotalea daltonii (strain DSM 22248 / JCM 15807 / FRC-32) (Geobacter daltonii), this protein is Glutamyl-tRNA reductase.